A 315-amino-acid chain; its full sequence is D-alanine--D-alanine ligase B (315 aa).

The ATP-grasp domain maps to 109-309; it reads KKVAAAAGVV…FAELLSWMVE (201 aa). 135-190 is a binding site for ATP; the sequence is PMKPPYVVKPVREGSSFGVVIVKEDQPHPPQVIGSADWKYGDEVMVEGYIAGRELT. Positions 259, 276, and 278 each coordinate Mg(2+).

It belongs to the D-alanine--D-alanine ligase family. Mg(2+) serves as cofactor. Mn(2+) is required as a cofactor.

It is found in the cytoplasm. The catalysed reaction is 2 D-alanine + ATP = D-alanyl-D-alanine + ADP + phosphate + H(+). It participates in cell wall biogenesis; peptidoglycan biosynthesis. In terms of biological role, cell wall formation. The protein is D-alanine--D-alanine ligase B of Brucella melitensis biotype 1 (strain ATCC 23456 / CCUG 17765 / NCTC 10094 / 16M).